The following is a 140-amino-acid chain: Nucleoside diphosphate kinase (140 aa).

ATP contacts are provided by Lys-11, Phe-59, Arg-87, Thr-93, Arg-104, and Asn-114. His-117 serves as the catalytic Pros-phosphohistidine intermediate.

The protein belongs to the NDK family. As to quaternary structure, homotetramer. Mg(2+) serves as cofactor.

It is found in the cytoplasm. The catalysed reaction is a 2'-deoxyribonucleoside 5'-diphosphate + ATP = a 2'-deoxyribonucleoside 5'-triphosphate + ADP. It carries out the reaction a ribonucleoside 5'-diphosphate + ATP = a ribonucleoside 5'-triphosphate + ADP. Functionally, major role in the synthesis of nucleoside triphosphates other than ATP. The ATP gamma phosphate is transferred to the NDP beta phosphate via a ping-pong mechanism, using a phosphorylated active-site intermediate. The chain is Nucleoside diphosphate kinase from Rickettsia peacockii (strain Rustic).